The primary structure comprises 296 residues: 4-hydroxybenzoate octaprenyltransferase (296 aa).

8 helical membrane-spanning segments follow: residues 28–48, 52–72, 102–122, 145–167, 174–196, 219–239, 241–261, and 275–295; these read PIGIYLLLWPTLSAVWIAGNG, LANVLIFGLGVVLMRAAGCCI, ALALFAMLVGVSFLLVLCTNS, TYYPQVVLGAAYSWGIPMAFTAA, SAWLLYIANLLWTVGYDTYYAMV, NIILTLQLLSLGCLLLAGSRF, LGGWFHLGLLGAAACFAWEYW, and FLHNHWAGLLVFIGVVLDYAF.

Belongs to the UbiA prenyltransferase family. The cofactor is Mg(2+).

The protein resides in the cell inner membrane. The enzyme catalyses all-trans-octaprenyl diphosphate + 4-hydroxybenzoate = 4-hydroxy-3-(all-trans-octaprenyl)benzoate + diphosphate. It participates in cofactor biosynthesis; ubiquinone biosynthesis. Catalyzes the prenylation of para-hydroxybenzoate (PHB) with an all-trans polyprenyl group. Mediates the second step in the final reaction sequence of ubiquinone-8 (UQ-8) biosynthesis, which is the condensation of the polyisoprenoid side chain with PHB, generating the first membrane-bound Q intermediate 3-octaprenyl-4-hydroxybenzoate. The sequence is that of 4-hydroxybenzoate octaprenyltransferase from Pseudomonas putida (strain GB-1).